Here is a 605-residue protein sequence, read N- to C-terminus: UPF0313 protein GSU2873 (605 aa).

One can recognise a Radical SAM core domain in the interval 291–561 (AYEQIRASVT…LQKALLLWHL (271 aa)). [4Fe-4S] cluster is bound by residues cysteine 305, cysteine 309, and cysteine 312. The tract at residues 586–605 (GGAAGGGGGRSGSGFRPGRT) is disordered. A compositionally biased stretch (gly residues) spans 587-597 (GAAGGGGGRSG).

This sequence belongs to the UPF0313 family. The cofactor is [4Fe-4S] cluster.

This Geobacter sulfurreducens (strain ATCC 51573 / DSM 12127 / PCA) protein is UPF0313 protein GSU2873.